Reading from the N-terminus, the 408-residue chain is Arginine biosynthesis bifunctional protein ArgJ (408 aa).

Positions 156, 182, 193, 279, 403, and 408 each coordinate substrate. T193 (nucleophile) is an active-site residue.

This sequence belongs to the ArgJ family. As to quaternary structure, heterotetramer of two alpha and two beta chains.

The protein resides in the cytoplasm. It carries out the reaction N(2)-acetyl-L-ornithine + L-glutamate = N-acetyl-L-glutamate + L-ornithine. The catalysed reaction is L-glutamate + acetyl-CoA = N-acetyl-L-glutamate + CoA + H(+). It functions in the pathway amino-acid biosynthesis; L-arginine biosynthesis; L-ornithine and N-acetyl-L-glutamate from L-glutamate and N(2)-acetyl-L-ornithine (cyclic): step 1/1. It participates in amino-acid biosynthesis; L-arginine biosynthesis; N(2)-acetyl-L-ornithine from L-glutamate: step 1/4. Its function is as follows. Catalyzes two activities which are involved in the cyclic version of arginine biosynthesis: the synthesis of N-acetylglutamate from glutamate and acetyl-CoA as the acetyl donor, and of ornithine by transacetylation between N(2)-acetylornithine and glutamate. This is Arginine biosynthesis bifunctional protein ArgJ from Bordetella bronchiseptica (strain ATCC BAA-588 / NCTC 13252 / RB50) (Alcaligenes bronchisepticus).